Reading from the N-terminus, the 144-residue chain is Probable transcription termination protein NusA (144 aa).

The KH domain maps to 101–144 (RTDIVVGVKPEEIGKVIGKEGKNIKLFKDAVSRYFNVNSISVKQ).

This sequence belongs to the NusA family.

The protein localises to the cytoplasm. In terms of biological role, participates in transcription termination. This is Probable transcription termination protein NusA from Thermoplasma acidophilum (strain ATCC 25905 / DSM 1728 / JCM 9062 / NBRC 15155 / AMRC-C165).